The following is a 482-amino-acid chain: Glutamate synthase [NADPH] small chain (482 aa).

One can recognise a 4Fe-4S ferredoxin-type domain in the interval 39–72 (ERANEQANRCSQCGVPFCQVHCPVSNNIPDWLKL). 4 residues coordinate [4Fe-4S] cluster: cysteine 95, cysteine 99, cysteine 105, and cysteine 109.

In terms of assembly, aggregate of 4 catalytic active heterodimers, consisting of a large and a small subunit. It depends on [4Fe-4S] cluster as a cofactor.

It carries out the reaction 2 L-glutamate + NADP(+) = L-glutamine + 2-oxoglutarate + NADPH + H(+). It functions in the pathway amino-acid biosynthesis; L-glutamate biosynthesis via GLT pathway; L-glutamate from 2-oxoglutarate and L-glutamine (NADP(+) route): step 1/1. The protein operates within energy metabolism; nitrogen metabolism. This Azospirillum brasilense protein is Glutamate synthase [NADPH] small chain (gltD).